We begin with the raw amino-acid sequence, 312 residues long: uncharacterized protein (312 aa).

This is an uncharacterized protein from Mycoplasma (Bacteriophage L2).